We begin with the raw amino-acid sequence, 417 residues long: Phosphoglycerate kinase 1 (417 aa).

Positions 23, 24, 25, 26, 38, 39, 62, 63, 65, 66, 121, 122, 168, and 169 each coordinate (2R)-3-phosphoglycerate. Residue Gly212 coordinates ADP. Gly212 serves as a coordination point for CDP. Positions 213 and 214 each coordinate AMP. Ala213 is an ATP binding site. Residue Ala213 coordinates Mg(2+). Position 217 (Asp217) interacts with CDP. Asp217 is a binding site for Mg(2+). Lys218 contributes to the AMP binding site. An ATP-binding site is contributed by Lys218. Gly236 provides a ligand contact to ADP. Gly236 is a CDP binding site. AMP contacts are provided by Gly237 and Gly311. Residues Gly237 and Gly311 each coordinate ATP. 2 residues coordinate CDP: Gly336 and Phe341. ADP is bound at residue Phe341. Position 342 (Glu342) interacts with AMP. Glu342, Asp374, and Thr375 together coordinate ATP. Asp374 lines the Mg(2+) pocket.

This sequence belongs to the phosphoglycerate kinase family. Monomer. It depends on Mg(2+) as a cofactor.

It localises to the cytoplasm. Its subcellular location is the mitochondrion. It catalyses the reaction (2R)-3-phosphoglycerate + ATP = (2R)-3-phospho-glyceroyl phosphate + ADP. It participates in carbohydrate degradation; glycolysis; pyruvate from D-glyceraldehyde 3-phosphate: step 2/5. Functionally, catalyzes one of the two ATP producing reactions in the glycolytic pathway via the reversible conversion of 1,3-diphosphoglycerate to 3-phosphoglycerate. Both L- and D- forms of purine and pyrimidine nucleotides can be used as substrates, but the activity is much lower on pyrimidines. Negatively regulates the biosynthesis of acetyl-CoA from pyruvate in the mitochondrion. This Rhizopus niveus protein is Phosphoglycerate kinase 1 (PGK1).